A 52-amino-acid polypeptide reads, in one-letter code: ATP synthase protein 8 (52 aa).

A helical membrane pass occupies residues 10 to 30; sequence FLMSLMIMMILIFMTINFYFF.

Belongs to the ATPase protein 8 family. In terms of assembly, F-type ATPases have 2 components, CF(1) - the catalytic core - and CF(0) - the membrane proton channel.

It is found in the mitochondrion membrane. Its function is as follows. Mitochondrial membrane ATP synthase (F(1)F(0) ATP synthase or Complex V) produces ATP from ADP in the presence of a proton gradient across the membrane which is generated by electron transport complexes of the respiratory chain. F-type ATPases consist of two structural domains, F(1) - containing the extramembraneous catalytic core and F(0) - containing the membrane proton channel, linked together by a central stalk and a peripheral stalk. During catalysis, ATP synthesis in the catalytic domain of F(1) is coupled via a rotary mechanism of the central stalk subunits to proton translocation. Part of the complex F(0) domain. Minor subunit located with subunit a in the membrane. The sequence is that of ATP synthase protein 8 (MT-ATP8) from Rhipicephalus sanguineus (Brown dog tick).